The primary structure comprises 134 residues: Mediator of RNA polymerase II transcription subunit 10 (134 aa).

It belongs to the Mediator complex subunit 10 family. Component of the Mediator complex.

The protein resides in the nucleus. Its function is as follows. Component of the Mediator complex, a coactivator involved in the regulated transcription of nearly all RNA polymerase II-dependent genes. Mediator functions as a bridge to convey information from gene-specific regulatory proteins to the basal RNA polymerase II transcription machinery. Mediator is recruited to promoters by direct interactions with regulatory proteins and serves as a scaffold for the assembly of a functional preinitiation complex with RNA polymerase II and the general transcription factors. Negatively regulates the Wnt signaling pathway and positively regulates the Nodal signaling pathway. Required for cardiac cushion formation. The polypeptide is Mediator of RNA polymerase II transcription subunit 10 (med10) (Danio rerio (Zebrafish)).